The following is a 147-amino-acid chain: Hemoglobin anodic subunit beta (147 aa).

One can recognise a Globin domain in the interval Glu2–His147. Heme b-binding residues include His63 and His92.

The protein belongs to the globin family. In terms of assembly, heterotetramer of two alpha chains and two beta chains. Red blood cells.

Its function is as follows. Involved in oxygen transport from gills to the various peripheral tissues. This Anguilla anguilla (European freshwater eel) protein is Hemoglobin anodic subunit beta (hbb1).